A 391-amino-acid polypeptide reads, in one-letter code: S-adenosylmethionine synthase (391 aa).

H19 lines the ATP pocket. D21 is a Mg(2+) binding site. A K(+)-binding site is contributed by E47. Residues E60 and Q103 each coordinate L-methionine. Positions Q103–R113 are flexible loop. Residues D168–K170, R236–F237, D245, R251–K252, A268, and K272 contribute to the ATP site. L-methionine is bound at residue D245. An L-methionine-binding site is contributed by K276.

This sequence belongs to the AdoMet synthase family. In terms of assembly, homotetramer; dimer of dimers. Mg(2+) is required as a cofactor. It depends on K(+) as a cofactor.

The protein localises to the cytoplasm. It catalyses the reaction L-methionine + ATP + H2O = S-adenosyl-L-methionine + phosphate + diphosphate. Its pathway is amino-acid biosynthesis; S-adenosyl-L-methionine biosynthesis; S-adenosyl-L-methionine from L-methionine: step 1/1. Catalyzes the formation of S-adenosylmethionine (AdoMet) from methionine and ATP. The overall synthetic reaction is composed of two sequential steps, AdoMet formation and the subsequent tripolyphosphate hydrolysis which occurs prior to release of AdoMet from the enzyme. This chain is S-adenosylmethionine synthase, found in Nitratidesulfovibrio vulgaris (strain ATCC 29579 / DSM 644 / CCUG 34227 / NCIMB 8303 / VKM B-1760 / Hildenborough) (Desulfovibrio vulgaris).